The sequence spans 391 residues: 5-amino-6-(D-ribitylamino)uracil--L-tyrosine 4-hydroxyphenyl transferase (391 aa).

In terms of domain architecture, Radical SAM core spans 55-302 (VTYVINRNIN…GAVARIYLGN (248 aa)). Residues Cys-69, Cys-73, and Cys-76 each contribute to the [4Fe-4S] cluster site.

The protein belongs to the radical SAM superfamily. CofH family. In terms of assembly, consists of two subunits, CofG and CofH. [4Fe-4S] cluster serves as cofactor.

The enzyme catalyses 5-amino-6-(D-ribitylamino)uracil + L-tyrosine + S-adenosyl-L-methionine = 5-amino-5-(4-hydroxybenzyl)-6-(D-ribitylimino)-5,6-dihydrouracil + 2-iminoacetate + 5'-deoxyadenosine + L-methionine + H(+). It functions in the pathway cofactor biosynthesis; coenzyme F0 biosynthesis. Its function is as follows. Catalyzes the radical-mediated synthesis of 5-amino-5-(4-hydroxybenzyl)-6-(D-ribitylimino)-5,6-dihydrouracil from 5-amino-6-(D-ribitylamino)uracil and L-tyrosine. The chain is 5-amino-6-(D-ribitylamino)uracil--L-tyrosine 4-hydroxyphenyl transferase from Trichormus variabilis (strain ATCC 29413 / PCC 7937) (Anabaena variabilis).